Consider the following 1030-residue polypeptide: Importin beta-like SAD2 homolog (1030 aa).

The residue at position 1 (M1) is an N-acetylmethionine. Residues 25–99 enclose the Importin N-terminal domain; sequence AEQSLNQLQH…RNQILVFVSQ (75 aa). Disordered regions lie at residues 886–928 and 940–964; these read AAKA…GSTL and SYSDDDDFSDDDFSDDEELESPIDE. Composition is skewed to acidic residues over residues 890-924 and 943-964; these read EEEEEDEDGDDDDMDEFQTDDEDEDGDDENPDETD and DDDDFSDDDFSDDEELESPIDE.

It belongs to the importin beta family.

The protein resides in the cytoplasm. It is found in the nucleus. Its function is as follows. Functions probably in nuclear protein import, either by acting as autonomous nuclear transport receptor or as an adapter-like protein in association with other importin subunits. The polypeptide is Importin beta-like SAD2 homolog (Arabidopsis thaliana (Mouse-ear cress)).